The following is a 35-amino-acid chain: Photosystem II reaction center protein T (35 aa).

Residues 3–23 traverse the membrane as a helical segment; it reads ALVYTFLLVSTLGIIFFAIFF.

This sequence belongs to the PsbT family. In terms of assembly, PSII is composed of 1 copy each of membrane proteins PsbA, PsbB, PsbC, PsbD, PsbE, PsbF, PsbH, PsbI, PsbJ, PsbK, PsbL, PsbM, PsbT, PsbY, PsbZ, Psb30/Ycf12, at least 3 peripheral proteins of the oxygen-evolving complex and a large number of cofactors. It forms dimeric complexes.

The protein resides in the plastid. It is found in the chloroplast thylakoid membrane. In terms of biological role, found at the monomer-monomer interface of the photosystem II (PS II) dimer, plays a role in assembly and dimerization of PSII. PSII is a light-driven water plastoquinone oxidoreductase, using light energy to abstract electrons from H(2)O, generating a proton gradient subsequently used for ATP formation. The chain is Photosystem II reaction center protein T from Asarum canadense (Wild ginger).